Reading from the N-terminus, the 605-residue chain is UPF0313 protein GSU2873 (605 aa).

Residues 291–561 (AYEQIRASVT…LQKALLLWHL (271 aa)) enclose the Radical SAM core domain. Residues Cys305, Cys309, and Cys312 each contribute to the [4Fe-4S] cluster site. The tract at residues 586–605 (GGAAGGGGGRSGSGFRPGRT) is disordered. The span at 587–597 (GAAGGGGGRSG) shows a compositional bias: gly residues.

It belongs to the UPF0313 family. Requires [4Fe-4S] cluster as cofactor.

The protein is UPF0313 protein GSU2873 of Geobacter sulfurreducens (strain ATCC 51573 / DSM 12127 / PCA).